The sequence spans 836 residues: Sucrose synthase 5 (836 aa).

The interval 270–748 (RIFNVVIFSV…GLQRINECYT (479 aa)) is GT-B glycosyltransferase. The tract at residues 805–836 (PPPLPPKPLVKPSASKGSKRTQPRLSFRLFGA) is disordered.

It belongs to the glycosyltransferase 1 family. Plant sucrose synthase subfamily. As to expression, detected in the whole plant but more precisely confined to the vasculature in cotyledons, leaves, petals, anthers and roots. Also detected in developing siliques, young immature rosette and cauline leaves.

Its subcellular location is the secreted. It localises to the cell wall. It carries out the reaction an NDP-alpha-D-glucose + D-fructose = a ribonucleoside 5'-diphosphate + sucrose + H(+). In terms of biological role, sucrose-cleaving enzyme that provides UDP-glucose and fructose for various metabolic pathways. Functions in callose synthesis at the site of phloem sieve elements. This is Sucrose synthase 5 (SUS5) from Arabidopsis thaliana (Mouse-ear cress).